Reading from the N-terminus, the 657-residue chain is Putative serine protease (657 aa).

3 helical membrane passes run 4-24 (YLAT…LLMP), 46-62 (WLLT…PSGT), and 109-131 (LLSG…VLML). The 196-residue stretch at 239–434 (QPGSDFVECE…ETDRYARTME (196 aa)) folds into the Peptidase S39 domain. Active-site for protease activity residues include His-284, Asp-318, and Ser-386. The segment at 513 to 605 (PLGGLPISNG…PPSTGSVPKS (93 aa)) is disordered. Residues 548–559 (HTRRRRRNKKKS) show a composition bias toward basic residues. Residues 560–569 (KNSETGHGPE) show a composition bias toward basic and acidic residues. Low complexity predominate over residues 571 to 589 (QSQQQSRPSSPIPDDSAPV).

Belongs to the peptidase S39B family.

It localises to the host membrane. Putative serine protease. The chain is Putative serine protease from Mushroom bacilliform virus (isolate Australia/AUS LF-1) (MBV).